Reading from the N-terminus, the 390-residue chain is Protein TAB2 homolog, chloroplastic (390 aa).

The transit peptide at 1–69 (MTTATAIVAG…RSISSESSTE (69 aa)) directs the protein to the chloroplast. The segment at 16 to 85 (RRSLPLPNPP…IADEEVEAEN (70 aa)) is disordered. Over residues 61 to 75 (SISSESSTEASAAAD) the composition is skewed to low complexity.

It is found in the plastid. It localises to the chloroplast. Its function is as follows. Nuclear genome-encoded factor involved in the biogenesis of photosystem I (PSI). Required for the accumulation of PSI during plant development. Does not seem to be required for the translation of mRNAs of the PSI subunits. The sequence is that of Protein TAB2 homolog, chloroplastic from Zea mays (Maize).